The following is a 1221-amino-acid chain: Adhesion G-protein coupled receptor G6 (1221 aa).

The signal sequence occupies residues 1–37; it reads MMFRSDRMWSCHWKWKPSPLLFLFALYIMCVPHSVWG. Over 38 to 862 the chain is Extracellular; it reads CANCRVVLSN…ASQLDARNTK (825 aa). A disulfide bridge links Cys-41 with Cys-67. Residues 41–149 enclose the CUB domain; sequence CRVVLSNPSG…KGFNASYIRV (109 aa). 2 residues coordinate Ca(2+): Glu-89 and Asp-97. Cys-94 and Cys-111 are joined by a disulfide. Residue Asn-121 is glycosylated (N-linked (GlcNAc...) asparagine). Residues Asp-134, Ser-136, and Ile-137 each coordinate Ca(2+). Residues Asn-143, Asn-206, Asn-258, Asn-314, Asn-324, Asn-353, Asn-438, Asn-445, Asn-452, Asn-485, Asn-488, and Asn-505 are each glycosylated (N-linked (GlcNAc...) asparagine). Residues 154 to 356 form the Pentraxin (PTX) domain; that stretch reads RNQKVILPQT…ALKAESNLSC (203 aa). Cystine bridges form between Cys-186-Cys-254 and Cys-231-Cys-277. The interval 473 to 837 is mediates interaction with laminin-2; it reads EPRLVLWALL…SDASETVCLC (365 aa). Intrachain disulfides connect Cys-525/Cys-560 and Cys-548/Cys-580. Residues Asn-563, Asn-593, Asn-600, Asn-605, Asn-667, Asn-673, Asn-695, Asn-704, Asn-750, Asn-776, Asn-811, and Asn-818 are each glycosylated (N-linked (GlcNAc...) asparagine). Residues 670 to 853 enclose the GAIN-B domain; sequence SHVNITTRNL…GVLMDLPRSA (184 aa). Intrachain disulfides connect Cys-803/Cys-835 and Cys-822/Cys-837. The GPS stretch occupies residues 803-853; that stretch reads CAFWDLNKNKSFGGWNTSGCVAHRDSDASETVCLCNHFTHFGVLMDLPRSA. The interval 842–850 is stachel; that stretch reads HFGVLMDLP. A helical membrane pass occupies residues 863-883; it reads VLTFISYIGCGISAIFSAATL. The Cytoplasmic segment spans residues 884–903; it reads LTYVAFEKLRRDYPSKILMN. The helical transmembrane segment at 904-924 threads the bilayer; it reads LSTALLFLNLLFLLDGWITSF. Residues 925 to 929 lie on the Extracellular side of the membrane; it reads NVDGL. The chain crosses the membrane as a helical span at residues 930-950; sequence CIAVAVLLHFFLLATFTWMGL. Residues 951-970 lie on the Cytoplasmic side of the membrane; that stretch reads EAIHMYIALVKVFNTYIRRY. A helical transmembrane segment spans residues 971-991; the sequence is ILKFCIIGWGLPALVVSVVLA. Topologically, residues 992–1024 are extracellular; it reads SRNNNEVYGKESYGKEKGDEFCWIQDPVIFYVT. A helical transmembrane segment spans residues 1025-1045; the sequence is CAGYFGVMFFLNIAMFIVVMV. The Cytoplasmic portion of the chain corresponds to 1046 to 1069; the sequence is QICGRNGKRSNRTLREEVLRNLRS. The chain crosses the membrane as a helical span at residues 1070–1090; the sequence is VVSLTFLLGMTWGFAFFAWGP. The Extracellular portion of the chain corresponds to 1091-1092; the sequence is LN. Residues 1093–1113 form a helical membrane-spanning segment; that stretch reads IPFMYLFSIFNSLQGLFIFIF. A 17alpha-hydroxyprogesterone-binding site is contributed by Asn-1103. The Cytoplasmic portion of the chain corresponds to 1114–1221; the sequence is HCAMKENVQK…GQVLVKTGPC (108 aa). The interval 1156–1176 is disordered; it reads NLGKSLSSSSIGSNSTYLTSK. Phosphoserine is present on residues Ser-1165 and Ser-1168.

This sequence belongs to the G-protein coupled receptor 2 family. Adhesion G-protein coupled receptor (ADGR) subfamily. Heterodimer of 2 chains generated by proteolytic processing; the large extracellular N-terminal fragment and the membrane-bound C-terminal fragment predominantly remain associated and non-covalently linked. Interacts with Laminin-2; this interaction stabilizes the receptor in an inactive state. Laminin-2 polymerization could facilitate ADGRG6-NTF removal, thereby exposing the tethered agonist to drive myelination. Interacts with PRNP. Interacts with ITGB1. Interacts with LRP1. In terms of processing, proteolytically cleaved into 2 conserved sites: one in the GPS region of the GAIN-B domain (S1 site) and the other in the middle of the extracellular domain (S2 site). The proteolytic cleavage at S1 site generates an extracellular subunit and a seven-transmembrane subunit. Furin is involved in the cleavage of the S2 site generating a soluble fragment. Processing at the GPS region occurred independent of and probably prior to the cleavage at the S2 site. Proteolytic cleavage is required for activation of the receptor. Highly glycosylated. In terms of tissue distribution, expressed in placenta and to a lower extent in pancreas and liver. Detected in aortic endothelial cells but not in skin microvascular endothelial cells.

It is found in the cell membrane. With respect to regulation, forms a heterodimer of 2 chains generated by proteolytic processing that remain associated through non-covalent interactions mediated by the GAIN-B domain. In the inactivated receptor, the Stachel sequence (also named stalk) is embedded in the GAIN-B domain, where it adopts a beta-strand conformation. On activation, the Stachel moves into the 7 transmembrane region and adopts a twisted hook-shaped configuration that forms contacts within the receptor, leading to coupling of a G-alpha protein, which activates signaling. The cleaved GAIN-B and N-terminal domains can then dissociate from the rest of the receptor. Its function is as follows. Adhesion G-protein coupled receptor (aGPCR) for steroid hormones, such as progesterone and 17alpha-hydroxyprogesterone (17OHP). Involved in many biological processes, such as myelination, sprouting angiogenesis, placenta, ear and cartilage development. Ligand binding causes a conformation change that triggers signaling via guanine nucleotide-binding proteins (G proteins) and modulates the activity of downstream effectors, such as adenylate cyclase. ADGRG6 is coupled to G(i) G alpha proteins and mediates inhibition of adenylate cyclase. Also able to couple to G(q) G proteins. Involved in myelination of the peripheral nervous system: required for differentiation of promyelinating Schwann cells and for normal myelination of axons. Also acts as a regulator of body length and bone mass. Acts as a regulator of blood-brain barrier formation in the central nervous system vie its association with LRP1 and ITGB1. The chain is Adhesion G-protein coupled receptor G6 from Homo sapiens (Human).